Consider the following 530-residue polypeptide: Ubiquitin carboxyl-terminal hydrolase 17-like protein 11 (530 aa).

In terms of domain architecture, USP spans 80 to 375 (AGLQNMGNTC…QAYVLFYIQK (296 aa)). Cys-89 acts as the Nucleophile in catalysis. The Proton acceptor role is filled by His-334. Basic and acidic residues-rich tracts occupy residues 382-392 (SESVSRGREPR) and 398-413 (DTDR…RDHP). Disordered stretches follow at residues 382–413 (SESV…RDHP) and 509–530 (RGRA…LVCQ). Residues 510 to 524 (GRARRSKGKNKHSKR) are compositionally biased toward basic residues.

This sequence belongs to the peptidase C19 family. USP17 subfamily.

Its subcellular location is the nucleus. It localises to the endoplasmic reticulum. It carries out the reaction Thiol-dependent hydrolysis of ester, thioester, amide, peptide and isopeptide bonds formed by the C-terminal Gly of ubiquitin (a 76-residue protein attached to proteins as an intracellular targeting signal).. Deubiquitinating enzyme that removes conjugated ubiquitin from specific proteins to regulate different cellular processes that may include cell proliferation, progression through the cell cycle, apoptosis, cell migration, and the cellular response to viral infection. This chain is Ubiquitin carboxyl-terminal hydrolase 17-like protein 11 (USP17L11), found in Homo sapiens (Human).